A 211-amino-acid chain; its full sequence is GATA transcription factor 19 (211 aa).

The GATA-type zinc finger occupies 77–102 (CANCDTTSTPLWRNGPRGPKSLCNAC). The interval 111–131 (RRASTARNSTSGGGSTAAGVP) is disordered.

Belongs to the type IV zinc-finger family. Class B subfamily. As to quaternary structure, forms heterodimers with GATA18.

The protein localises to the nucleus. In terms of biological role, transcriptional regulator that specifically binds 5'-GATA-3' or 5'-GAT-3' motifs within gene promoters. Regulates both flower and shoot apical meristem (SAM) development, especially for establishing organ boundaries in shoots and flowers, probably by controlling the number and position of WUS-expressing cells. This is GATA transcription factor 19 from Arabidopsis thaliana (Mouse-ear cress).